A 330-amino-acid polypeptide reads, in one-letter code: tRNA dimethylallyltransferase (330 aa).

Over residues 1–11 the composition is skewed to polar residues; it reads MDYSHSDSPST. The disordered stretch occupies residues 1 to 21; that stretch reads MDYSHSDSPSTAPAGKTPVDQ. Position 29-36 (29-36) interacts with ATP; that stretch reads GPTGAGKS. Position 31–36 (31–36) interacts with substrate; it reads TGAGKS. Residues 56–59 are interaction with substrate tRNA; sequence DSMQ.

It belongs to the IPP transferase family. Monomer. Mg(2+) is required as a cofactor.

The catalysed reaction is adenosine(37) in tRNA + dimethylallyl diphosphate = N(6)-dimethylallyladenosine(37) in tRNA + diphosphate. Catalyzes the transfer of a dimethylallyl group onto the adenine at position 37 in tRNAs that read codons beginning with uridine, leading to the formation of N6-(dimethylallyl)adenosine (i(6)A). The sequence is that of tRNA dimethylallyltransferase from Corynebacterium urealyticum (strain ATCC 43042 / DSM 7109).